A 638-amino-acid chain; its full sequence is Threonine--tRNA ligase (638 aa).

Positions 1 to 61 constitute a TGS domain; it reads MPLITLPDGN…DKDCSVKIFT (61 aa). The segment at 243 to 535 is catalytic; that stretch reads DHRKLGKEMD…LIENYAGKFP (293 aa). Zn(2+) is bound by residues Cys335, His386, and His512.

This sequence belongs to the class-II aminoacyl-tRNA synthetase family. As to quaternary structure, homodimer. It depends on Zn(2+) as a cofactor.

The protein resides in the cytoplasm. The enzyme catalyses tRNA(Thr) + L-threonine + ATP = L-threonyl-tRNA(Thr) + AMP + diphosphate + H(+). Its function is as follows. Catalyzes the attachment of threonine to tRNA(Thr) in a two-step reaction: L-threonine is first activated by ATP to form Thr-AMP and then transferred to the acceptor end of tRNA(Thr). Also edits incorrectly charged L-seryl-tRNA(Thr). This Pelagibacter ubique (strain HTCC1062) protein is Threonine--tRNA ligase.